Here is a 183-residue protein sequence, read N- to C-terminus: Inosine/xanthosine triphosphatase (183 aa).

D75 contacts Mg(2+). 75-76 is a substrate binding site; that stretch reads DG.

It belongs to the YjjX NTPase family. Homodimer. Mg(2+) is required as a cofactor. It depends on Mn(2+) as a cofactor.

The enzyme catalyses XTP + H2O = XDP + phosphate + H(+). The catalysed reaction is ITP + H2O = IDP + phosphate + H(+). Phosphatase that hydrolyzes non-canonical purine nucleotides such as XTP and ITP to their respective diphosphate derivatives. Probably excludes non-canonical purines from DNA/RNA precursor pool, thus preventing their incorporation into DNA/RNA and avoiding chromosomal lesions. The polypeptide is Inosine/xanthosine triphosphatase (Vibrio vulnificus (strain YJ016)).